The sequence spans 336 residues: Inositol 2-dehydrogenase (336 aa).

Belongs to the Gfo/Idh/MocA family. As to quaternary structure, homotetramer.

It carries out the reaction myo-inositol + NAD(+) = scyllo-inosose + NADH + H(+). Its function is as follows. Involved in the oxidation of myo-inositol (MI) to 2-keto-myo-inositol (2KMI or 2-inosose). The polypeptide is Inositol 2-dehydrogenase (Pseudomonas savastanoi pv. phaseolicola (strain 1448A / Race 6) (Pseudomonas syringae pv. phaseolicola (strain 1448A / Race 6))).